A 290-amino-acid polypeptide reads, in one-letter code: Nucleoid occlusion protein (290 aa).

The segment at residues E153–L172 is a DNA-binding region (H-T-H motif).

It belongs to the ParB family.

Its subcellular location is the cytoplasm. It localises to the nucleoid. In terms of biological role, effects nucleoid occlusion by binding relatively nonspecifically to DNA and preventing the assembly of the division machinery in the vicinity of the nucleoid, especially under conditions that disturb the cell cycle. It helps to coordinate cell division and chromosome segregation by preventing the formation of the Z ring through the nucleoid, which would cause chromosome breakage. In Bacillus cytotoxicus (strain DSM 22905 / CIP 110041 / 391-98 / NVH 391-98), this protein is Nucleoid occlusion protein.